The following is a 282-amino-acid chain: tRNA pseudouridine synthase A (282 aa).

D61 (nucleophile) is an active-site residue. A substrate-binding site is contributed by Y119.

The protein belongs to the tRNA pseudouridine synthase TruA family. Homodimer.

The catalysed reaction is uridine(38/39/40) in tRNA = pseudouridine(38/39/40) in tRNA. Formation of pseudouridine at positions 38, 39 and 40 in the anticodon stem and loop of transfer RNAs. The polypeptide is tRNA pseudouridine synthase A (Nostoc sp. (strain PCC 7120 / SAG 25.82 / UTEX 2576)).